Reading from the N-terminus, the 426-residue chain is Glutamate-1-semialdehyde 2,1-aminomutase (426 aa).

The residue at position 265 (Lys-265) is an N6-(pyridoxal phosphate)lysine.

Belongs to the class-III pyridoxal-phosphate-dependent aminotransferase family. HemL subfamily. In terms of assembly, homodimer. Pyridoxal 5'-phosphate serves as cofactor.

It is found in the cytoplasm. The catalysed reaction is (S)-4-amino-5-oxopentanoate = 5-aminolevulinate. It participates in porphyrin-containing compound metabolism; protoporphyrin-IX biosynthesis; 5-aminolevulinate from L-glutamyl-tRNA(Glu): step 2/2. The protein is Glutamate-1-semialdehyde 2,1-aminomutase of Alteromonas mediterranea (strain DSM 17117 / CIP 110805 / LMG 28347 / Deep ecotype).